A 574-amino-acid chain; its full sequence is MNNSALRAYLSTRAPDQIHSAFVAYLANLDLVAHQFPQIASDIVQELIDQRSYVKLIASENYSSLAVQAAMANLLTDKYAEGFPHHRYYGGCQNVDSIESAAAAEACALFGAEHAYVQPHSGADANLVAFWAILSRQIEMPTLSSLGVTAATHLSEEQWEVLRQKMGNQKLMGLDYFSGGHLTHGYRQNVSGRMFRVVSYAVDRDTGLLDYAAIEAQAKRERPLILLAGYSAYPRSINFRIFREIADKVGAVLMADMAHFAGLVAGGVFTGDEDPVRWSHIVTSTTHKTLRGPRGAFILCKKEFAEAVDKGCPLVLGGPLPHVMAAKAVAFREARNAAFKTYAHAVRDNARALADACIQQGMQLQTGGTDNHLLLLDVRPFGLTGRQAERALIDCGVTLNRNSLPFDPNGAWLTSGLRIGTPAVTSLGMGPEEMKRIARLIARVLGAATPVRTKTGALSKSAAEVPGEVRSSVCSEVRELLARFTLYPELDEPFLRAHFTRRPAGQNTCRRRDLNPYGVTPTDFESVVSASFTTSARAQPITRGTKGTAVHVVFLREAPCLPLREPLFFSHEEF.

Residue 180–182 (GHL) coordinates (6S)-5,6,7,8-tetrahydrofolate. At Lys288 the chain carries N6-(pyridoxal phosphate)lysine. (6S)-5,6,7,8-tetrahydrofolate is bound at residue Glu306.

This sequence belongs to the SHMT family. As to quaternary structure, homodimer. Pyridoxal 5'-phosphate serves as cofactor.

The protein localises to the cytoplasm. The catalysed reaction is (6R)-5,10-methylene-5,6,7,8-tetrahydrofolate + glycine + H2O = (6S)-5,6,7,8-tetrahydrofolate + L-serine. Its pathway is one-carbon metabolism; tetrahydrofolate interconversion. It functions in the pathway amino-acid biosynthesis; glycine biosynthesis; glycine from L-serine: step 1/1. Its function is as follows. Catalyzes the reversible interconversion of serine and glycine with tetrahydrofolate (THF) serving as the one-carbon carrier. This reaction serves as the major source of one-carbon groups required for the biosynthesis of purines, thymidylate, methionine, and other important biomolecules. Also exhibits THF-independent aldolase activity toward beta-hydroxyamino acids, producing glycine and aldehydes, via a retro-aldol mechanism. The protein is Serine hydroxymethyltransferase of Treponema pallidum (strain Nichols).